The chain runs to 224 residues: PKHD-type hydroxylase Sbal_3634 (224 aa).

The region spanning 78-176 is the Fe2OG dioxygenase domain; the sequence is QFYPPLFNRY…RTAAFMWLQS (99 aa). His-96, Asp-98, and His-157 together coordinate Fe cation. Residue Arg-167 coordinates 2-oxoglutarate.

The cofactor is Fe(2+). It depends on L-ascorbate as a cofactor.

The polypeptide is PKHD-type hydroxylase Sbal_3634 (Shewanella baltica (strain OS155 / ATCC BAA-1091)).